Reading from the N-terminus, the 388-residue chain is S-adenosylmethionine synthase (388 aa).

H17 is a binding site for ATP. Mg(2+) is bound at residue D19. E45 serves as a coordination point for K(+). L-methionine is bound by residues E58 and Q102. A flexible loop region spans residues 102 to 112; the sequence is QSVHIAQGVDA. ATP contacts are provided by residues 167–169, D241, 247–248, A264, and K268; these read DAK and RK. D241 is a binding site for L-methionine. L-methionine is bound at residue K272.

It belongs to the AdoMet synthase family. Homotetramer; dimer of dimers. Mg(2+) is required as a cofactor. The cofactor is K(+).

The protein resides in the cytoplasm. The enzyme catalyses L-methionine + ATP + H2O = S-adenosyl-L-methionine + phosphate + diphosphate. It participates in amino-acid biosynthesis; S-adenosyl-L-methionine biosynthesis; S-adenosyl-L-methionine from L-methionine: step 1/1. Functionally, catalyzes the formation of S-adenosylmethionine (AdoMet) from methionine and ATP. The overall synthetic reaction is composed of two sequential steps, AdoMet formation and the subsequent tripolyphosphate hydrolysis which occurs prior to release of AdoMet from the enzyme. This Maricaulis maris (strain MCS10) (Caulobacter maris) protein is S-adenosylmethionine synthase.